Here is a 2386-residue protein sequence, read N- to C-terminus: MSQHAKRKAGSLDLSPRGLDDRQAFGQLLKEVLALDKEHELGRSNSLPSMTSELVEVLIEVGLLAFKHDDSKSEFISPKMLKEAHLSLQALMLILKRSPTVLREIKSSVTLLDWILPRTISLFADIRFIKLFDSLKEFHKLIYQLISEKSFLWDLYASFMRYWKYYITNVSSIVLQITNATFPYKMPSPNSQPLQSITPNYPTHREDKFDLLIINIEEACTFFFESAHFFAQCSYLKKSNFPSPPLFTAWTWIKPCFFNFVILLKRISIGDSQLFLHLHSRIVQTLCCFSLNFIYHGLPICEKSKHILMSSINLTLGSLKKTYTVANTAISLFFLSLFVLPKTVAGLFYPFGVSLLSDFKVLEQLEPDSDLKKAIILFKCRYQSSEIDQTTLRAFGEICTGKLENTLFSNSELNLFLLHYLSLDNDLSNILKVDFQNGHNICTFAKWCINNNLDEPSNLKHFREMLDYYSSHNVTISEDDLKNFSLVLCTHVAKVNEKTNSIFRTYEVHGCEVCNSFCLLFDERSLFKIPYHELFCALLKNPDIISSSVKQSLLLDGFFRWSQHCSNFNKESMLSLREFIMKALASTSRCLRVVAAKVLPIFIKGPNNLDIVEFHKESKALIFNTLKILAVENTAILETVILSWISLSRVVEEEELHFVLLEVISSVINSGIFYQGIGLSALQQIASTRHISVWQLLSPYWPTVSVAIVQGMGKKPNIASLFAQLMNISEGDFLIRTQAYTLPFLVLTKNKALIVRIAELSQSDVATLCLTNMHKILASLLTTDHPNLEESVMLLLSLATSDFEKVDLTSLLRSDPISITVELLQLYQNDVPHEKIENALRKVAMIVSQVVNDEDLSNKELLYDFFNNHILGILAEFSNILNDLKGKTSINEKIKTIVGIEKMLSLCGGAVKLGLPQILSNLQSAFQNEHLRFYAIKAWFSLILATKEPEYSSIAGLSLVILPPLFPYLEPQEAELVIQIFDFISSDTHKCLQGLKWAIPTSLDSACFSLKAKEIFCSLQNEDFYSELQSIIKCLTNENEPVCYLGLQKLELFFQAKVDELHDTLNLDISNEVLDQLLRCLLDCCVKYASTNMQISYLAAKNLGELGAIDPSRAKAQHIIKETVVLDNFENGEESLKFILDFMQSQLIPAFLVTTDTKAQGFLAYALQEFLKLGGFKSAVINKKKGLTVVTEHWMSLPDLSKRVLIPFLTSKYHLTPIPKIDIRYPIYKENVTIHTWMQLFSLKLMEYAHSQNAEKIFGICSKVVKDQEVNIPCFLLPFLVLNVILTESELEVNKVIEEFQLVINQPGPDGLNSVGQQRYTSFVDVFFKIVDYLNKWLRMRKKRNWDRRSAIARKENRYMSVEDATSRESSISKVESFLSRFPSKTLGIVSLNCGFHARALFYWEQHIRNATAPYAALESDYRVLQEIYAGIDDPDEIEAVSLNFHDYSFDQQLLLHENSGTWDSALSCYEIIIQKDPENKKAKIGLLNSMLQSGHYESLVLSLDSFIINDNHEYSKMLNLGIEASWRSLSIDSLKKCLSKSNLESFEAKLGSIFYQYLRKDSFAELTERLQPLYVDAATAIANTGAHSAYDCYDILSKLHAINDFSRIAETDGIVSDNLDIVLRRRLSQVAPYGKFKHQILSTHLVGYEKFENTKKTAEIYLEIARISRKNGQFQRAFNAILKAMDLDKPLATIEHAQWWWHQGQHRKAISELNFSLNNNMFDLVDEHEERPKNRKETLGNPLKGKVFLKLTKWLGKAGQLGLKDLETYYHKAVEIYSECENTHYYLGHHRVLMYEEEQKLPVNEQSERFLSGELVTRIINEFGRSLYYGTNHIYESMPKLLTLWLDFGAEELRLSKDDGEKYFREHIISSRKKSLELMNSNVCRLSMKIPQYFFLVALSQMISRVCHPNNKVYKILEHIIANVVASYPGETLWQLMATIKSTSQKRSLRGKSILNVLHSRKLSMSSKVDIKALSQSAILITEKLINLCNTRINSKSVKMSLKDHFRLSFDDPVDLVIPAKSFLDITLPAKDANRASHYPFPKTQPTLLKFEDEVDIMNSLQKPRKVYVRGTDGNLYPFLCKPKDDLRKDARLMEFNNLICKILRKDQEANRRNLCIRTYVVIPLNEECGFIEWVNHTRPFREILLKSYRQKNIPISYQEIKVDLDFALRSPNPGDIFEKKILPKFPPVFYEWFVESFPEPNNWVTSRQNYCRTLAVMSIVGYVLGLGDRHGENILFDEFTGEAIHVDFNCLFDKGLTFEKPEKVPFRLTHNMVDAMGPTGYEGGFRKASEITMRLLRSNQDTLMSVLESFLHDPLVEWNRKKSSSKYPNNEANEVLDIIRKKFQGFMPGETIPLSIEGQIQELIKSAVNPKNLVEMYIGWAAYF.

Residues 1386–1943 (TLGIVSLNCG…LWQLMATIKS (558 aa)) enclose the FAT domain. The PI3K/PI4K catalytic domain maps to 2052–2370 (FEDEVDIMNS…QIQELIKSAV (319 aa)). Residues 2058-2064 (IMNSLQK) are G-loop. A catalytic loop region spans residues 2227–2235 (GLGDRHGEN). Positions 2247–2271 (HVDFNCLFDKGLTFEKPEKVPFRLT) are activation loop. Residues 2354–2386 (IPLSIEGQIQELIKSAVNPKNLVEMYIGWAAYF) enclose the FATC domain.

Belongs to the PI3/PI4-kinase family. ATM subfamily. As to quaternary structure, interacts with crb2 (via BRCT domain). Interacts with chk1.

It is found in the nucleus. The catalysed reaction is L-seryl-[protein] + ATP = O-phospho-L-seryl-[protein] + ADP + H(+). The enzyme catalyses L-threonyl-[protein] + ATP = O-phospho-L-threonyl-[protein] + ADP + H(+). In terms of biological role, serine/threonine kinase which activates checkpoint signaling upon genotoxic stresses. Involved in G2 arrest following DNA damage where it phosphorylates chk1. Phosphorylation of 'Thr-73' and 'Ser-80' of checkpoint mediator crb2 promotes its interaction with chk1. It is also involved in the dependence of mitosis on the completion of DNA replication. This chain is Protein kinase rad3 (rad3), found in Schizosaccharomyces pombe (strain 972 / ATCC 24843) (Fission yeast).